Here is a 451-residue protein sequence, read N- to C-terminus: Chromosomal replication initiator protein DnaA (451 aa).

The interval 1 to 72 (MQSIEDIWQE…ANILQEITGR (72 aa)) is domain I, interacts with DnaA modulators. A domain II region spans residues 72-108 (RLFDVRFIDGEQEENFEYTVIKPNPALDEDGIEIGKH). Positions 109 to 325 (MLNPRYVFDT…GALIRVVAYS (217 aa)) are domain III, AAA+ region. Gly-153, Gly-155, Lys-156, and Thr-157 together coordinate ATP. The interval 326-451 (SLVNKDITAG…KNLRKAQNMF (126 aa)) is domain IV, binds dsDNA.

The protein belongs to the DnaA family. In terms of assembly, oligomerizes as a right-handed, spiral filament on DNA at oriC.

The protein localises to the cytoplasm. Functionally, plays an essential role in the initiation and regulation of chromosomal replication. ATP-DnaA binds to the origin of replication (oriC) to initiate formation of the DNA replication initiation complex once per cell cycle. Binds the DnaA box (a 9 base pair repeat at the origin) and separates the double-stranded (ds)DNA. Forms a right-handed helical filament on oriC DNA; dsDNA binds to the exterior of the filament while single-stranded (ss)DNA is stabiized in the filament's interior. The ATP-DnaA-oriC complex binds and stabilizes one strand of the AT-rich DNA unwinding element (DUE), permitting loading of DNA polymerase. After initiation quickly degrades to an ADP-DnaA complex that is not apt for DNA replication. Binds acidic phospholipids. The chain is Chromosomal replication initiator protein DnaA from Listeria monocytogenes serotype 4b (strain F2365).